The sequence spans 483 residues: tRNA sulfurtransferase (483 aa).

A THUMP domain is found at 61–165 (AEVLEILTTT…DELLNQVIAR (105 aa)). ATP contacts are provided by residues 183 to 184 (LI), Lys265, Gly287, and Gln296. The cysteines at positions 344 and 457 are disulfide-linked. Residues 405 to 483 (EEGNAVVLDI…GFNNVKVYRP (79 aa)) enclose the Rhodanese domain. Cys457 acts as the Cysteine persulfide intermediate in catalysis.

It belongs to the ThiI family.

It localises to the cytoplasm. It catalyses the reaction [ThiI sulfur-carrier protein]-S-sulfanyl-L-cysteine + a uridine in tRNA + 2 reduced [2Fe-2S]-[ferredoxin] + ATP + H(+) = [ThiI sulfur-carrier protein]-L-cysteine + a 4-thiouridine in tRNA + 2 oxidized [2Fe-2S]-[ferredoxin] + AMP + diphosphate. The enzyme catalyses [ThiS sulfur-carrier protein]-C-terminal Gly-Gly-AMP + S-sulfanyl-L-cysteinyl-[cysteine desulfurase] + AH2 = [ThiS sulfur-carrier protein]-C-terminal-Gly-aminoethanethioate + L-cysteinyl-[cysteine desulfurase] + A + AMP + 2 H(+). The protein operates within cofactor biosynthesis; thiamine diphosphate biosynthesis. Its function is as follows. Catalyzes the ATP-dependent transfer of a sulfur to tRNA to produce 4-thiouridine in position 8 of tRNAs, which functions as a near-UV photosensor. Also catalyzes the transfer of sulfur to the sulfur carrier protein ThiS, forming ThiS-thiocarboxylate. This is a step in the synthesis of thiazole, in the thiamine biosynthesis pathway. The sulfur is donated as persulfide by IscS. This chain is tRNA sulfurtransferase, found in Vibrio cholerae serotype O1 (strain ATCC 39315 / El Tor Inaba N16961).